The following is a 609-amino-acid chain: ATP-dependent lipid A-core flippase (609 aa).

A run of 6 helical transmembrane segments spans residues 47–67, 88–108, 167–187, 190–210, 279–299, and 305–325; these read LLAA…IYLI, ILML…VGSF, AIIT…VMFV, WQLS…ISII, VIQI…AIFG, and GSSW…AAIL. One can recognise an ABC transmembrane type-1 domain in the interval 47-340; sequence LLAAIGSIFF…LTKVNVVIQK (294 aa). In terms of domain architecture, ABC transporter spans 372-606; it reads VTIKDLSFAF…GGLYTRLYQS (235 aa). 404 to 411 is a binding site for ATP; that stretch reads GKSGSGKT.

This sequence belongs to the ABC transporter superfamily. Lipid exporter (TC 3.A.1.106) family. Homodimer.

The protein localises to the cell inner membrane. It carries out the reaction ATP + H2O + lipid A-core oligosaccharideSide 1 = ADP + phosphate + lipid A-core oligosaccharideSide 2.. Involved in lipopolysaccharide (LPS) biosynthesis. Translocates lipid A-core from the inner to the outer leaflet of the inner membrane. Transmembrane domains (TMD) form a pore in the inner membrane and the ATP-binding domain (NBD) is responsible for energy generation. In Francisella tularensis subsp. tularensis (strain FSC 198), this protein is ATP-dependent lipid A-core flippase.